The following is a 143-amino-acid chain: Ribosome-binding factor A (143 aa).

The segment covering 119–129 (AVGDKPAVPRD) has biased composition (basic and acidic residues). The segment at 119–143 (AVGDKPAVPRDDNDDPVSDNPERDA) is disordered.

This sequence belongs to the RbfA family. In terms of assembly, monomer. Binds 30S ribosomal subunits, but not 50S ribosomal subunits or 70S ribosomes.

Its subcellular location is the cytoplasm. One of several proteins that assist in the late maturation steps of the functional core of the 30S ribosomal subunit. Associates with free 30S ribosomal subunits (but not with 30S subunits that are part of 70S ribosomes or polysomes). Required for efficient processing of 16S rRNA. May interact with the 5'-terminal helix region of 16S rRNA. This is Ribosome-binding factor A from Marinobacter nauticus (strain ATCC 700491 / DSM 11845 / VT8) (Marinobacter aquaeolei).